Here is a 250-residue protein sequence, read N- to C-terminus: Leucyl/phenylalanyl-tRNA--protein transferase (250 aa).

Belongs to the L/F-transferase family.

The protein resides in the cytoplasm. The catalysed reaction is N-terminal L-lysyl-[protein] + L-leucyl-tRNA(Leu) = N-terminal L-leucyl-L-lysyl-[protein] + tRNA(Leu) + H(+). The enzyme catalyses N-terminal L-arginyl-[protein] + L-leucyl-tRNA(Leu) = N-terminal L-leucyl-L-arginyl-[protein] + tRNA(Leu) + H(+). It carries out the reaction L-phenylalanyl-tRNA(Phe) + an N-terminal L-alpha-aminoacyl-[protein] = an N-terminal L-phenylalanyl-L-alpha-aminoacyl-[protein] + tRNA(Phe). Functions in the N-end rule pathway of protein degradation where it conjugates Leu, Phe and, less efficiently, Met from aminoacyl-tRNAs to the N-termini of proteins containing an N-terminal arginine or lysine. This is Leucyl/phenylalanyl-tRNA--protein transferase from Bordetella avium (strain 197N).